The following is a 145-amino-acid chain: MELALLCGLVVMAGVIPIQGGILNLNKMVKQVTGKMPILSYWPYGCHCGLGGRGQPKDATDWCCQTHDCCYDHLKTQGCSIYKDYYRYNFSQGNIHCSDKGSWCEQQLCACDKEVAFCLKRNLDTYQKRLRFYWRPHCRGQTPGC.

An N-terminal signal peptide occupies residues 1 to 20 (MELALLCGLVVMAGVIPIQG). Cystine bridges form between cysteine 46–cysteine 138, cysteine 48–cysteine 64, cysteine 63–cysteine 118, cysteine 69–cysteine 145, cysteine 70–cysteine 111, cysteine 79–cysteine 104, and cysteine 97–cysteine 109. Residues histidine 47, glycine 49, and glycine 51 each coordinate Ca(2+). Residue histidine 67 is part of the active site. Aspartate 68 contributes to the Ca(2+) binding site. N-linked (GlcNAc...) asparagine glycosylation occurs at asparagine 89. Residue aspartate 112 is part of the active site.

The protein belongs to the phospholipase A2 family. Ca(2+) is required as a cofactor. Highly expressed in pancreas and spleen and less abundantly in colon, thymus, placenta, small intestine, and prostate.

The protein resides in the secreted. It catalyses the reaction a 1,2-diacyl-sn-glycero-3-phosphoethanolamine + H2O = a 1-acyl-sn-glycero-3-phosphoethanolamine + a fatty acid + H(+). The enzyme catalyses 1-hexadecanoyl-2-(9Z-octadecenoyl)-sn-glycero-3-phosphoethanolamine + H2O = 1-hexadecanoyl-sn-glycero-3-phosphoethanolamine + (9Z)-octadecenoate + H(+). It carries out the reaction 1-hexadecanoyl-2-(9Z,12Z-octadecadienoyl)-sn-glycero-3-phosphoethanolamine + H2O = 1-hexadecanoyl-sn-glycero-3-phosphoethanolamine + (9Z,12Z)-octadecadienoate + H(+). The catalysed reaction is 1,2-dihexadecanoyl-sn-glycero-3-phospho-(1'-sn-glycerol) + H2O = 1-hexadecanoyl-sn-glycero-3-phospho-(1'-sn-glycerol) + hexadecanoate + H(+). It catalyses the reaction 1-hexadecanoyl-2-(9Z-octadecenoyl)-sn-glycero-3-phospho-(1'-sn-glycerol) + H2O = 1-hexadecanoyl-sn-glycero-3-phospho-(1'-sn-glycerol) + (9Z)-octadecenoate + H(+). The enzyme catalyses a 1,2-diacyl-sn-glycero-3-phosphocholine + H2O = a 1-acyl-sn-glycero-3-phosphocholine + a fatty acid + H(+). It carries out the reaction 1,2-dihexadecanoyl-sn-glycero-3-phosphocholine + H2O = 1-hexadecanoyl-sn-glycero-3-phosphocholine + hexadecanoate + H(+). The catalysed reaction is 1-hexadecanoyl-2-(9Z-octadecenoyl)-sn-glycero-3-phosphocholine + H2O = 1-hexadecanoyl-sn-glycero-3-phosphocholine + (9Z)-octadecenoate + H(+). It catalyses the reaction 1-hexadecanoyl-2-(9Z,12Z-octadecadienoyl)-sn-glycero-3-phosphocholine + H2O = (9Z,12Z)-octadecadienoate + 1-hexadecanoyl-sn-glycero-3-phosphocholine + H(+). The enzyme catalyses 1-hexadecanoyl-2-(4Z,7Z,10Z,13Z,16Z,19Z-docosahexaenoyl)-sn-glycero-3-phosphocholine + H2O = (4Z,7Z,10Z,13Z,16Z,19Z)-docosahexaenoate + 1-hexadecanoyl-sn-glycero-3-phosphocholine + H(+). In terms of biological role, secretory calcium-dependent phospholipase A2 that primarily targets extracellular lipids, exerting anti-inflammatory and immunosuppressive functions. Hydrolyzes the ester bond of the fatty acyl group attached at sn-2 position of phospholipids (phospholipase A2 activity) with preference for phosphatidylethanolamines and phosphatidylglycerols over phosphatidylcholines. In draining lymph nodes, selectively hydrolyzes diacyl and alkenyl forms of phosphatidylethanolamines, releasing omega-3 polyunsaturated fatty acids (PUFAs) such as eicosapentaenoate and docosahexaenoate that are precursors of the anti-inflammatory lipid mediators, resolvins. During the resolution phase of acute inflammation drives docosahexaenoate-derived resolvin D1 synthesis, which suppresses dendritic cell activation and T-helper 1 immune response. May act in an autocrine and paracrine manner. Via a mechanism independent of its catalytic activity, promotes differentiation of regulatory T cells (Tregs) and participates in the maintenance of immune tolerance. May contribute to lipid remodeling of cellular membranes and generation of lipid mediators involved in pathogen clearance. Displays bactericidal activity against Gram-positive bacteria by directly hydrolyzing phospholipids of the bacterial membrane. This Homo sapiens (Human) protein is Group IID secretory phospholipase A2 (PLA2G2D).